Reading from the N-terminus, the 421-residue chain is Serine--tRNA ligase (421 aa).

231–233 is a binding site for L-serine; the sequence is TAE. 262–264 lines the ATP pocket; sequence RRE. L-serine is bound at residue Glu285. An ATP-binding site is contributed by 349–352; that stretch reads EISS. Residue Ser384 coordinates L-serine.

This sequence belongs to the class-II aminoacyl-tRNA synthetase family. Type-1 seryl-tRNA synthetase subfamily. Homodimer. The tRNA molecule binds across the dimer.

It is found in the cytoplasm. The enzyme catalyses tRNA(Ser) + L-serine + ATP = L-seryl-tRNA(Ser) + AMP + diphosphate + H(+). It carries out the reaction tRNA(Sec) + L-serine + ATP = L-seryl-tRNA(Sec) + AMP + diphosphate + H(+). It participates in aminoacyl-tRNA biosynthesis; selenocysteinyl-tRNA(Sec) biosynthesis; L-seryl-tRNA(Sec) from L-serine and tRNA(Sec): step 1/1. In terms of biological role, catalyzes the attachment of serine to tRNA(Ser). Is also able to aminoacylate tRNA(Sec) with serine, to form the misacylated tRNA L-seryl-tRNA(Sec), which will be further converted into selenocysteinyl-tRNA(Sec). The sequence is that of Serine--tRNA ligase from Hydrogenobaculum sp. (strain Y04AAS1).